Here is a 179-residue protein sequence, read N- to C-terminus: Probable chorismate pyruvate-lyase (179 aa).

Substrate-binding residues include R82, L120, and E165.

The protein belongs to the UbiC family.

The protein resides in the cytoplasm. The catalysed reaction is chorismate = 4-hydroxybenzoate + pyruvate. Its pathway is cofactor biosynthesis; ubiquinone biosynthesis. In terms of biological role, removes the pyruvyl group from chorismate, with concomitant aromatization of the ring, to provide 4-hydroxybenzoate (4HB) for the ubiquinone pathway. The sequence is that of Probable chorismate pyruvate-lyase from Vibrio vulnificus (strain YJ016).